Reading from the N-terminus, the 449-residue chain is Deoxyguanosinetriphosphate triphosphohydrolase-like protein (449 aa).

Residues 1–27 (MTSSVWQERRHGEDKQRRNDHRSPYQR) are disordered. Residues 7–27 (QERRHGEDKQRRNDHRSPYQR) are compositionally biased toward basic and acidic residues. Residues 59-255 (RLTHSLEVSQ…MELADDIAYA (197 aa)) enclose the HD domain.

Belongs to the dGTPase family. Type 2 subfamily.

This chain is Deoxyguanosinetriphosphate triphosphohydrolase-like protein, found in Shewanella baltica (strain OS195).